We begin with the raw amino-acid sequence, 276 residues long: Adenylyl-sulfate kinase 1, chloroplastic (276 aa).

The N-terminal 38 residues, 1 to 38 (MIAAGAKSLLGLSMASPKGIFDSNSMSNSRSVVVVRAC), are a transit peptide targeting the chloroplast. A disordered region spans residues 46-74 (TLSHNKNGSIPEVKSINGHTGQKQGPLST). Positions 62–74 (NGHTGQKQGPLST) are enriched in polar residues. 108 to 116 (GLSGSGKST) serves as a coordination point for ATP. Substrate-binding positions include D138, R141, R155, N158, 181–182 (IS), and G231. S182 acts as the Phosphoserine intermediate in catalysis.

This sequence belongs to the APS kinase family. In terms of assembly, homodimer; disulfide-linked. Interacts with APK2. Expressed in root vasculature, root tips, leaf epidermal and guard cells, pollen grains and funiculus of developing seeds.

It localises to the plastid. The protein localises to the chloroplast. It catalyses the reaction adenosine 5'-phosphosulfate + ATP = 3'-phosphoadenylyl sulfate + ADP + H(+). It participates in sulfur metabolism; hydrogen sulfide biosynthesis; sulfite from sulfate: step 2/3. Its function is as follows. Catalyzes the synthesis of activated sulfate. Essential for plant reproduction and viability. Required for the production of glucosinolates. The sequence is that of Adenylyl-sulfate kinase 1, chloroplastic (APK1) from Arabidopsis thaliana (Mouse-ear cress).